Consider the following 129-residue polypeptide: Fluoride-specific ion channel FluC 2 (129 aa).

Transmembrane regions (helical) follow at residues 3–23, 32–52, 59–79, and 90–110; these read FLYV…MNLW, ATLA…RFLA, LVLL…FSAF, and GAWL…LIMV. Gly71 and Thr74 together coordinate Na(+).

It belongs to the fluoride channel Fluc/FEX (TC 1.A.43) family.

Its subcellular location is the cell membrane. The catalysed reaction is fluoride(in) = fluoride(out). With respect to regulation, na(+) is not transported, but it plays an essential structural role and its presence is essential for fluoride channel function. Fluoride-specific ion channel. Important for reducing fluoride concentration in the cell, thus reducing its toxicity. The protein is Fluoride-specific ion channel FluC 2 of Listeria monocytogenes serovar 1/2a (strain ATCC BAA-679 / EGD-e).